Reading from the N-terminus, the 238-residue chain is MQNLDPQELEKFEKMAKSWWDPNGDFKPIHQLNPTRLQYIQQQANGLTEKKVLDVGCGGGILSEAMAKQGAIVTGIDMTVAPLEVARLHAKEQGLVIDYQQITVEEFLQKQTALYAEKFDVITCMEMLEHVPDPLSIIQSCRALLKPNGVLFFSTINRTFKAWALVVLGAEYILKMLPKGTHDYDKFIKPAELLHWTDQANLVCKNICGYHYNLLTGKFWLNQDVSANYMATFQHKSI.

Residues R36, G56, D77, and M125 each coordinate S-adenosyl-L-methionine.

The protein belongs to the methyltransferase superfamily. UbiG/COQ3 family.

The catalysed reaction is a 3-demethylubiquinol + S-adenosyl-L-methionine = a ubiquinol + S-adenosyl-L-homocysteine + H(+). The enzyme catalyses a 3-(all-trans-polyprenyl)benzene-1,2-diol + S-adenosyl-L-methionine = a 2-methoxy-6-(all-trans-polyprenyl)phenol + S-adenosyl-L-homocysteine + H(+). It functions in the pathway cofactor biosynthesis; ubiquinone biosynthesis. In terms of biological role, O-methyltransferase that catalyzes the 2 O-methylation steps in the ubiquinone biosynthetic pathway. The polypeptide is Ubiquinone biosynthesis O-methyltransferase (Histophilus somni (strain 2336) (Haemophilus somnus)).